Here is a 226-residue protein sequence, read N- to C-terminus: Uracil-DNA glycosylase (226 aa).

Catalysis depends on D64, which acts as the Proton acceptor.

This sequence belongs to the uracil-DNA glycosylase (UDG) superfamily. UNG family.

The protein resides in the cytoplasm. The catalysed reaction is Hydrolyzes single-stranded DNA or mismatched double-stranded DNA and polynucleotides, releasing free uracil.. In terms of biological role, excises uracil residues from the DNA which can arise as a result of misincorporation of dUMP residues by DNA polymerase or due to deamination of cytosine. This chain is Uracil-DNA glycosylase, found in Vibrio cholerae serotype O1 (strain ATCC 39541 / Classical Ogawa 395 / O395).